A 155-amino-acid chain; its full sequence is Cathelicidin-1 (155 aa).

An N-terminal signal peptide occupies residues 1-29 (METQRASLSLGRCSLWLLLLGLALPSASA). Gln-30 carries the pyrrolidone carboxylic acid modification. Positions 30–143 (QVLSYREAVL…KQPWAPPQAA (114 aa)) are excised as a propeptide. Cystine bridges form between Cys-85–Cys-96, Cys-107–Cys-124, and Cys-146–Cys-154.

The protein belongs to the cathelicidin family.

It localises to the secreted. Functionally, potent microbicidal activity; active against S.aureus and E.coli. This chain is Cathelicidin-1 (CATHL1A), found in Ovis aries (Sheep).